The following is a 139-amino-acid chain: Putative pre-16S rRNA nuclease (139 aa).

Belongs to the YqgF nuclease family.

It is found in the cytoplasm. Functionally, could be a nuclease involved in processing of the 5'-end of pre-16S rRNA. The chain is Putative pre-16S rRNA nuclease from Pectobacterium atrosepticum (strain SCRI 1043 / ATCC BAA-672) (Erwinia carotovora subsp. atroseptica).